Here is a 187-residue protein sequence, read N- to C-terminus: MADQLSEEQIVEFREAFSLFDKDGDGSITTKELGTVMRSLGQNPTEAELQDMISEVDADSNGNIEFKEFLGLMARKLRDKDSEEELKEAFRVFDKDQNGFISAAELRHVMANIGERLTDEEVGEMISEADVDGDGQINYEEFVKCMMAKKRRKRIEEKREHDGGSRTKSAGPSAAPASKRGQKCVIL.

The residue at position 2 (alanine 2) is an N-acetylalanine. EF-hand domains are found at residues 8 to 43 (EQIV…LGQN), 44 to 79 (PTEA…KLRD), 81 to 116 (DSEE…IGER), and 117 to 152 (LTDE…KKRR). Aspartate 21, aspartate 23, aspartate 25, serine 27, glutamate 32, aspartate 57, aspartate 59, asparagine 61, asparagine 63, glutamate 68, aspartate 94, aspartate 96, asparagine 98, glutamate 105, aspartate 130, aspartate 132, aspartate 134, glutamine 136, and glutamate 141 together coordinate Ca(2+). Residues 153 to 187 (KRIEEKREHDGGSRTKSAGPSAAPASKRGQKCVIL) are disordered. Residues 154 to 165 (RIEEKREHDGGS) are compositionally biased toward basic and acidic residues. Residues 169–178 (SAGPSAAPAS) show a composition bias toward low complexity. A Cysteine methyl ester modification is found at cysteine 184. The S-farnesyl cysteine moiety is linked to residue cysteine 184. The propeptide at 185 to 187 (VIL) is removed in mature form.

Belongs to the calmodulin family. As to expression, expressed in roots, etiolated shoots and flowers.

It localises to the membrane. In terms of biological role, calcium-binding protein that binds and activates CAMK1, a calcium/calmodulin-dependent kinase. The protein is Calmodulin-like protein 1 (CML1) of Oryza sativa subsp. indica (Rice).